The sequence spans 539 residues: NADH-quinone oxidoreductase subunit N 2 (539 aa).

Helical transmembrane passes span 11–31 (LIPE…DVLT), 52–72 (LMGL…FSWM), 106–126 (PLTH…VILT), 141–161 (LILF…LIMI), 193–213 (YIFG…LLGL), 248–268 (GVAI…VAIV), 296–316 (AGFF…SILG), 329–349 (WTSL…LAAL), 357–377 (MLAY…VGTQ), 385–405 (LMYL…LALV), 429–449 (LLLT…GFFV), 462–484 (AKWL…LRFL), and 500–520 (VGFG…GLGI).

Belongs to the complex I subunit 2 family. NDH-1 is composed of 14 different subunits. Subunits NuoA, H, J, K, L, M, N constitute the membrane sector of the complex.

The protein localises to the cell membrane. The catalysed reaction is a quinone + NADH + 5 H(+)(in) = a quinol + NAD(+) + 4 H(+)(out). In terms of biological role, NDH-1 shuttles electrons from NADH, via FMN and iron-sulfur (Fe-S) centers, to quinones in the respiratory chain. The immediate electron acceptor for the enzyme in this species is believed to be ubiquinone. Couples the redox reaction to proton translocation (for every two electrons transferred, four hydrogen ions are translocated across the cytoplasmic membrane), and thus conserves the redox energy in a proton gradient. The protein is NADH-quinone oxidoreductase subunit N 2 of Herpetosiphon aurantiacus (strain ATCC 23779 / DSM 785 / 114-95).